A 380-amino-acid chain; its full sequence is Succinyl-diaminopimelate desuccinylase (380 aa).

Residue His-71 coordinates Zn(2+). The active site involves Asp-73. Asp-104 is a Zn(2+) binding site. Glu-136 (proton acceptor) is an active-site residue. Zn(2+)-binding residues include Glu-137, Glu-166, and His-351.

Belongs to the peptidase M20A family. DapE subfamily. Homodimer. Zn(2+) serves as cofactor. The cofactor is Co(2+).

The catalysed reaction is N-succinyl-(2S,6S)-2,6-diaminopimelate + H2O = (2S,6S)-2,6-diaminopimelate + succinate. Its pathway is amino-acid biosynthesis; L-lysine biosynthesis via DAP pathway; LL-2,6-diaminopimelate from (S)-tetrahydrodipicolinate (succinylase route): step 3/3. Functionally, catalyzes the hydrolysis of N-succinyl-L,L-diaminopimelic acid (SDAP), forming succinate and LL-2,6-diaminopimelate (DAP), an intermediate involved in the bacterial biosynthesis of lysine and meso-diaminopimelic acid, an essential component of bacterial cell walls. This chain is Succinyl-diaminopimelate desuccinylase, found in Ehrlichia canis (strain Jake).